A 521-amino-acid chain; its full sequence is GMP synthase [glutamine-hydrolyzing] (521 aa).

The region spanning 8–203 is the Glutamine amidotransferase type-1 domain; it reads KILILDFGAQ…VVDICGCQTL (196 aa). Residue Cys85 is the Nucleophile of the active site. Active-site residues include His177 and Glu179. One can recognise a GMPS ATP-PPase domain in the interval 204–396; that stretch reads WTAANIIDDQ…LGLPRTMVYR (193 aa). ATP is bound at residue 231-237; sequence SGGVDSS.

Homodimer.

It catalyses the reaction XMP + L-glutamine + ATP + H2O = GMP + L-glutamate + AMP + diphosphate + 2 H(+). It functions in the pathway purine metabolism; GMP biosynthesis; GMP from XMP (L-Gln route): step 1/1. Its function is as follows. Catalyzes the synthesis of GMP from XMP. The protein is GMP synthase [glutamine-hydrolyzing] of Xanthomonas oryzae pv. oryzae (strain PXO99A).